Here is a 330-residue protein sequence, read N- to C-terminus: 4-hydroxythreonine-4-phosphate dehydrogenase (330 aa).

Substrate-binding residues include H134 and T135. A divalent metal cation-binding residues include H163, H208, and H263. Substrate-binding residues include K271, N280, and R289.

This sequence belongs to the PdxA family. As to quaternary structure, homodimer. The cofactor is Zn(2+). Mg(2+) serves as cofactor. Co(2+) is required as a cofactor.

The protein resides in the cytoplasm. It catalyses the reaction 4-(phosphooxy)-L-threonine + NAD(+) = 3-amino-2-oxopropyl phosphate + CO2 + NADH. It functions in the pathway cofactor biosynthesis; pyridoxine 5'-phosphate biosynthesis; pyridoxine 5'-phosphate from D-erythrose 4-phosphate: step 4/5. Its function is as follows. Catalyzes the NAD(P)-dependent oxidation of 4-(phosphooxy)-L-threonine (HTP) into 2-amino-3-oxo-4-(phosphooxy)butyric acid which spontaneously decarboxylates to form 3-amino-2-oxopropyl phosphate (AHAP). The protein is 4-hydroxythreonine-4-phosphate dehydrogenase of Methylococcus capsulatus (strain ATCC 33009 / NCIMB 11132 / Bath).